The sequence spans 2159 residues: ATP-binding cassette sub-family A member 7 (2159 aa).

Residues 22-42 (PIQLLVELLWPLFLFFILVAV) form a helical membrane-spanning segment. Residues 43-546 (RHSHPPLEHH…DVFLRVLSRS (504 aa)) are Extracellular-facing. Residues Cys75 and Cys222 are joined by a disulfide bond. N-linked (GlcNAc...) asparagine glycosylation occurs at Asn309. Helical transmembrane passes span 547–567 (LPLF…KAVV), 590–610 (LGWF…LVLV), 623–643 (VVIF…SFLL), 652–672 (LAAA…VLCV), 678–698 (LHLG…GFGC), and 732–752 (AFLL…EAVC). The region spanning 804–1035 (VSIRGLKKHF…LGCGYYLTLV (232 aa)) is the ABC transporter 1 domain. An ATP-binding site is contributed by 838 to 845 (GHNGAGKT). Residues 846–866 (TTLSILSGLFPPSSGSASILG) form a helical membrane-spanning segment. Disordered stretches follow at residues 1042–1088 (VTHD…GAVP) and 1172–1192 (GGDS…PTGP). Residues 1044 to 1061 (HDAKGDSEDPRREKKSDG) show a composition bias toward basic and acidic residues. Residues 1062–1081 (NGRTSDTAFTRGTSDKSNQA) are compositionally biased toward polar residues. A helical membrane pass occupies residues 1246–1266 (VVLPALFVGLALFFSLIVPPF). Residues 1267–1551 (GQYPPLQLSP…TLIASSVDVL (285 aa)) are Extracellular-facing. The cysteines at positions 1359 and 1373 are disulfide-linked. 5 consecutive transmembrane segments (helical) span residues 1552 to 1572 (VSIC…LVLI), 1598 to 1618 (FLWD…IFLA), 1635 to 1655 (LLLL…SFFF), 1663 to 1683 (VVLT…TFVL), and 1743 to 1763 (IIGK…LITL). The region spanning 1807–2039 (LVLRDLTKVY…FGAGHTLTLR (233 aa)) is the ABC transporter 2 domain. 1841 to 1848 (GVNGAGKT) is an ATP binding site. The segment at 2118–2159 (QGEEEESSRQEAEEEEVSKPGRQHPKRVSRFLEDPSSVETMI) is disordered. Positions 2119 to 2133 (GEEEESSRQEAEEEE) are enriched in acidic residues.

This sequence belongs to the ABC transporter superfamily. ABCA family. In terms of processing, N-glycosylated. In terms of tissue distribution, widely expressed with higher expression in brain, lung, adrenal gland, spleen and hematopoietic tissues (at protein level). In the brain, expressed in cortex, cerebellum, hippocampus, olfactory bulb, neurons, astrocytes and microglia (at protein level). Also expressed in adipocytes and macrophages (at protein level). Expressed in thymocytes (at protein level). Highly expressed in spleen and hematopoietic tissues. Expressed in brain, lung, macrophages, microglia, oligodendrocytes and neurons.

Its subcellular location is the cell membrane. It localises to the golgi apparatus membrane. It is found in the early endosome membrane. The protein localises to the cytoplasm. The protein resides in the cell projection. Its subcellular location is the ruffle membrane. It localises to the phagocytic cup. Its function is as follows. Probable ATP-binding cassette (ABC) transporter that plays a role in lipid homeostasis and macrophage-mediated phagocytosis. Binds APOA1 and may function in apolipoprotein-mediated phospholipid efflux from cells. May also mediate cholesterol efflux. May regulate cellular ceramide homeostasis during keratinocyte differentiation. Involved in lipid raft organization and CD1D localization on thymocytes and antigen-presenting cells, which plays an important role in natural killer T-cell development and activation. Plays a role in phagocytosis of apoptotic cells by macrophages. Macrophage phagocytosis is stimulated by APOA1 or APOA2, probably by stabilization of ABCA7. Also involved in phagocytic clearance of amyloid-beta by microglia cells and macrophages. Further limits amyloid-beta production by playing a role in the regulation of amyloid-beta A4 precursor protein (APP) endocytosis and/or processing. In Mus musculus (Mouse), this protein is ATP-binding cassette sub-family A member 7 (Abca7).